The primary structure comprises 189 residues: Peptidyl-tRNA hydrolase (189 aa).

F15 contacts tRNA. The active-site Proton acceptor is H20. The tRNA site is built by Y65, N67, and N113.

It belongs to the PTH family. In terms of assembly, monomer.

It is found in the cytoplasm. The enzyme catalyses an N-acyl-L-alpha-aminoacyl-tRNA + H2O = an N-acyl-L-amino acid + a tRNA + H(+). Functionally, hydrolyzes ribosome-free peptidyl-tRNAs (with 1 or more amino acids incorporated), which drop off the ribosome during protein synthesis, or as a result of ribosome stalling. Its function is as follows. Catalyzes the release of premature peptidyl moieties from peptidyl-tRNA molecules trapped in stalled 50S ribosomal subunits, and thus maintains levels of free tRNAs and 50S ribosomes. This is Peptidyl-tRNA hydrolase from Phytoplasma australiense.